Consider the following 515-residue polypeptide: MTKRALISVSDKSGIIDFAKELKNLGWDIISTGGTKVALDNAGVETIAIDDVTGFPEMMDGRVKTLHPNIHGGLLARRDVDSHLQAAKDNNIELIDLVVVNLYPFKETILRPDVTYDLAVENIDIGGPSMLRSAAKNHASVTVVVDPADYATVLGELADAGQTTFETRQRLAAKVFRHIAAYDALIAEYFTAQVGEAKPEKLTITYDLKQAMRYGENPQQDADFYQKALPTDYSIASAKQLNGKELSFNNIRDVDAAIRIIRDFKDRPTVVALKHMNPCGIGQADDIETAWDYAYEADPVSIFGGIVVLNREVDAATAKKMHPIFLEIIIAPSYSEEALAILTNKKKNLRILELPFDAQAASEVEAEYTGVVGGLLVQNQDVVAENPSDWQVVTDRQPTEQEATALEFAWKAIKYVKSNGIIITNDHMTLGLGAGQTNRVGSVKIAIEQAKDHLDGAVLASDAFFPFADNIEEVAAAGVKAIIQPGGSVRDQDSIDAANKHGLTMIFTGVRHFRH.

In terms of domain architecture, MGS-like spans 1-145 (MTKRALISVS…KNHASVTVVV (145 aa)).

Belongs to the PurH family.

It catalyses the reaction (6R)-10-formyltetrahydrofolate + 5-amino-1-(5-phospho-beta-D-ribosyl)imidazole-4-carboxamide = 5-formamido-1-(5-phospho-D-ribosyl)imidazole-4-carboxamide + (6S)-5,6,7,8-tetrahydrofolate. It carries out the reaction IMP + H2O = 5-formamido-1-(5-phospho-D-ribosyl)imidazole-4-carboxamide. It participates in purine metabolism; IMP biosynthesis via de novo pathway; 5-formamido-1-(5-phospho-D-ribosyl)imidazole-4-carboxamide from 5-amino-1-(5-phospho-D-ribosyl)imidazole-4-carboxamide (10-formyl THF route): step 1/1. Its pathway is purine metabolism; IMP biosynthesis via de novo pathway; IMP from 5-formamido-1-(5-phospho-D-ribosyl)imidazole-4-carboxamide: step 1/1. The protein is Bifunctional purine biosynthesis protein PurH of Streptococcus pyogenes serotype M6 (strain ATCC BAA-946 / MGAS10394).